The sequence spans 201 residues: Alanine--tRNA ligase (201 aa).

Belongs to the class-II aminoacyl-tRNA synthetase family. It depends on Zn(2+) as a cofactor.

The protein localises to the cytoplasm. The enzyme catalyses tRNA(Ala) + L-alanine + ATP = L-alanyl-tRNA(Ala) + AMP + diphosphate. Functionally, catalyzes the attachment of alanine to tRNA(Ala) in a two-step reaction: alanine is first activated by ATP to form Ala-AMP and then transferred to the acceptor end of tRNA(Ala). Also edits incorrectly charged Ser-tRNA(Ala) and Gly-tRNA(Ala) via its editing domain. In Rhizobium leguminosarum bv. viciae, this protein is Alanine--tRNA ligase (alaS).